The sequence spans 479 residues: Citrate synthase, mitochondrial (479 aa).

Residues 1 to 37 (MSAILSTTSKSFLSRGSTRQCQNMQKALFALLNARHY) constitute a mitochondrion transit peptide. Residues histidine 312, histidine 358, and aspartate 413 contribute to the active site. Position 462 is a phosphoserine (serine 462).

This sequence belongs to the citrate synthase family. As to quaternary structure, monomer and homodimer. Exists as an inactive monomer when phosphorylated. Homodimerization is dependent on dephosphorylation of Ser-462 by PTC7 and is required for activity. In terms of processing, phosphorylation at Ser-462. Dephosphorylated at Ser-462 by PTC7.

It is found in the mitochondrion matrix. The catalysed reaction is oxaloacetate + acetyl-CoA + H2O = citrate + CoA + H(+). It functions in the pathway carbohydrate metabolism; tricarboxylic acid cycle; isocitrate from oxaloacetate: step 1/2. Its activity is regulated as follows. Phosphorylation at Ser-462 inhibits catalytic activity. Dephosphorylation at Ser-462 by PTC7 enhances catalytic activity. Functionally, specific citrate synthase with catalytic activity only with acetyl-CoA. The chain is Citrate synthase, mitochondrial from Saccharomyces cerevisiae (strain ATCC 204508 / S288c) (Baker's yeast).